A 186-amino-acid polypeptide reads, in one-letter code: UPF0301 protein Swit_2673 (186 aa).

Belongs to the UPF0301 (AlgH) family.

The sequence is that of UPF0301 protein Swit_2673 from Rhizorhabdus wittichii (strain DSM 6014 / CCUG 31198 / JCM 15750 / NBRC 105917 / EY 4224 / RW1) (Sphingomonas wittichii).